The sequence spans 379 residues: tRNA (guanine(26)-N(2))-dimethyltransferase (379 aa).

Residues Met1–Pro26 are disordered. The region spanning Arg4 to Ile369 is the Trm1 methyltransferase domain. Positions Glu8–Pro25 are enriched in polar residues. Arg41, Arg66, Asp82, Asp108, and Ala109 together coordinate S-adenosyl-L-methionine. Residues Cys237, Cys240, Cys257, and Cys260 each coordinate Zn(2+).

It belongs to the class I-like SAM-binding methyltransferase superfamily. Trm1 family.

It carries out the reaction guanosine(26) in tRNA + 2 S-adenosyl-L-methionine = N(2)-dimethylguanosine(26) in tRNA + 2 S-adenosyl-L-homocysteine + 2 H(+). Its function is as follows. Dimethylates a single guanine residue at position 26 of a number of tRNAs using S-adenosyl-L-methionine as donor of the methyl groups. The polypeptide is tRNA (guanine(26)-N(2))-dimethyltransferase (Methanocorpusculum labreanum (strain ATCC 43576 / DSM 4855 / Z)).